Here is a 163-residue protein sequence, read N- to C-terminus: Nucleotide-binding protein cbdbA1256 (163 aa).

Belongs to the YajQ family.

Its function is as follows. Nucleotide-binding protein. The sequence is that of Nucleotide-binding protein cbdbA1256 from Dehalococcoides mccartyi (strain CBDB1).